The primary structure comprises 520 residues: UBX domain-containing protein 11 (520 aa).

Residues 1–26 are disordered; sequence MSSPLASLSKTRKVPLPSEPMNPGRR. Residues 76-149 are a coiled coil; that stretch reads MAFMTRKLWD…VREMERFLSD (74 aa). One can recognise an SEP domain in the interval 230–294; it reads LEPIPLKLYR…VSDLRNQVYL (65 aa). The region spanning 392-469 is the UBX domain; sequence PAPPLSMLRI…GLVPKAALLL (78 aa). Residues 476 to 520 form a disordered region; that stretch reads KSSLKFSPGPCPGPGPGPSPGPGPGPSPGPGPGPSPCPGPSPSPQ. Over residues 484–520 the composition is skewed to pro residues; sequence GPCPGPGPGPSPGPGPGPSPGPGPGPSPCPGPSPSPQ. Repeat copies occupy residues 487–494, 495–502, and 503–510. The segment at 487–510 is 3 X 8 AA tandem repeats of P-G-P-G-P-G-P-S; sequence PGPGPGPSPGPGPGPSPGPGPGPS.

Interacts with GNA12, GNA13, RND1, RND2 and RND3.

It is found in the cytoplasm. It localises to the cytoskeleton. May be involved in the reorganization of actin cytoskeleton mediated by RND1, RND2 and RND3. Promotes RHOA activation mediated by GNA12 and GNA13. This is UBX domain-containing protein 11 (UBXN11) from Homo sapiens (Human).